The chain runs to 263 residues: Putative protein JayE (263 aa).

The protein belongs to the Mu gp47/PBSX XkdT family.

The sequence is that of Putative protein JayE (jayE) from Escherichia coli (strain K12).